A 314-amino-acid polypeptide reads, in one-letter code: MSEIEQTGQSNHYPVMLSESVAGLNIDPNGIYIDCTFGRGGHSRAILNELGEQGRLLAIDQDPEAIRYADANFDDPRFEIQHGSFEALQQYCEARDWVGKIDGILIDLGVSSPQLDEAERGFSFMRSGPLDMRMNPQTGLSAKEWLTQVDEKTLAQVLKQYGEERFSGRIARHIKEAVQEQKLQTTLDLAQVVTKASPKTEKHKHPATRTFQAIRIAVNRELDVLKTVLEVSVAVLKTGGRLSVISFHSLEDRIVKQFIRDQSRIKDLFPDSPIQLEVVEPVIKKVGKPVFPSKEECQENPRSRSAVLRIAERI.

Residues 40-42, D60, F85, D107, and Q114 each bind S-adenosyl-L-methionine; that span reads GGH.

Belongs to the methyltransferase superfamily. RsmH family.

It localises to the cytoplasm. The catalysed reaction is cytidine(1402) in 16S rRNA + S-adenosyl-L-methionine = N(4)-methylcytidine(1402) in 16S rRNA + S-adenosyl-L-homocysteine + H(+). In terms of biological role, specifically methylates the N4 position of cytidine in position 1402 (C1402) of 16S rRNA. The sequence is that of Ribosomal RNA small subunit methyltransferase H from Hydrogenovibrio crunogenus (strain DSM 25203 / XCL-2) (Thiomicrospira crunogena).